Consider the following 488-residue polypeptide: Dipeptide and tripeptide permease B (488 aa).

Topologically, residues 1–27 (MSKTASVGLWDQPKPFFMIFFVELWER) are cytoplasmic. The chain crosses the membrane as a helical span at residues 28 to 48 (FGFYGVQGILAIYFVQQLGFS). Over 49–52 (EEQS) the chain is Periplasmic. A helical transmembrane segment spans residues 53 to 73 (FITFGAFTALVYGLISVGGYV). Over 74-82 (GDHILGTKR) the chain is Cytoplasmic. A helical transmembrane segment spans residues 83–103 (TIVLGAIVMAIGYYMIGLSIM). Topologically, residues 104–106 (KPE) are periplasmic. The helical transmembrane segment at 107 to 127 (LIFYALGTVAVGNGLFKANPA) threads the bilayer. Residues 128 to 146 (SLLAKCYQPQDPRLDGAFT) lie on the Cytoplasmic side of the membrane. A helical transmembrane segment spans residues 147 to 167 (LFYMSINLGSLFSLSLAPVIA). At 168–172 (EKYGY) the chain is on the periplasmic side. The helical transmembrane segment at 173-193 (TVTYNICGIGLIIALLVYIAC) threads the bilayer. Topologically, residues 194–211 (RRMVHNIGSAPDHHPVKP) are cytoplasmic. Residues 212–232 (IGLIAVLIGSVVMVGVCAWLL) traverse the membrane as a helical segment. The Periplasmic segment spans residues 233–234 (HN). A helical transmembrane segment spans residues 235-255 (IKVANIALFAITTIVVLIFFW). At 256–267 (QAFKQNRVGRNK) the chain is on the cytoplasmic side. A helical transmembrane segment spans residues 268 to 288 (MFVAFILMLQAVVFFILYNQM). At 289–311 (PMSLNFFAINNVHHQILGFDVNP) the chain is on the periplasmic side. The chain crosses the membrane as a helical span at residues 312-332 (VSFQAFNPFWIIIVSPILAVV). Topologically, residues 333-348 (YTKLGAKGKDFSMPAK) are cytoplasmic. The helical transmembrane segment at 349 to 369 (FTFGMFLCSLGFLTAAASGLF) threads the bilayer. Over 370–378 (ADAQGITSP) the chain is Periplasmic. The chain crosses the membrane as a helical span at residues 379–399 (WFIVLVYLFQSVGELMISALG). Topologically, residues 400–423 (LAMVAAFVPSYLTGFILGMWFLSQ) are cytoplasmic. Residues 424 to 444 (AVASMLASHVAALTATPVGVT) traverse the membrane as a helical segment. Topologically, residues 445–455 (DPLQTLPIYMS) are periplasmic. The chain crosses the membrane as a helical span at residues 456–476 (VFGKIGVATLIVAIIMTFMVP). Residues 477–488 (WLNRIMREEVKA) lie on the Cytoplasmic side of the membrane.

This sequence belongs to the major facilitator superfamily. Proton-dependent oligopeptide transporter (POT/PTR) (TC 2.A.17) family. DtpB subfamily.

The protein resides in the cell inner membrane. Proton-dependent permease that transports di- and tripeptides. This Xenorhabdus bovienii (strain SS-2004) (Xenorhabdus nematophila subsp. bovienii) protein is Dipeptide and tripeptide permease B.